We begin with the raw amino-acid sequence, 271 residues long: Pyridoxine kinase (271 aa).

Residue asparagine 141 coordinates ATP. A Mg(2+)-binding site is contributed by glutamate 144. ATP contacts are provided by residues 178–182 (TGGGK), aspartate 190, isoleucine 206, glycine 215, and lysine 240.

This sequence belongs to the ThiD family. Homodimer.

The enzyme catalyses pyridoxal + ATP = pyridoxal 5'-phosphate + ADP + H(+). Functionally, phosphorylates B6 vitamers; functions in a salvage pathway. Uses pyridoxal, pyridoxine, and pyridoxamine as substrates. Can also use hydroxymethylpyrimidine (HMP) as substrate. The protein is Pyridoxine kinase (pdxK) of Bacillus subtilis (strain 168).